Consider the following 335-residue polypeptide: Protein-arginine kinase (335 aa).

In terms of domain architecture, Phosphagen kinase C-terminal spans 21 to 244 (IVMSSRIRLA…NQIIHEEKQI (224 aa)). ATP contacts are provided by residues 24 to 28 (SSRIR), H82, R115, 166 to 170 (RASVM), and 197 to 202 (RGIYGE).

This sequence belongs to the ATP:guanido phosphotransferase family.

The enzyme catalyses L-arginyl-[protein] + ATP = N(omega)-phospho-L-arginyl-[protein] + ADP + H(+). Functionally, catalyzes the specific phosphorylation of arginine residues in proteins. This chain is Protein-arginine kinase, found in Staphylococcus aureus (strain USA300).